A 504-amino-acid polypeptide reads, in one-letter code: Cytochrome P450 2D10 (504 aa).

Serine 249 carries the phosphoserine modification. A heme-binding site is contributed by cysteine 446.

This sequence belongs to the cytochrome P450 family. Requires heme as cofactor.

It is found in the endoplasmic reticulum membrane. Its subcellular location is the microsome membrane. The enzyme catalyses an organic molecule + reduced [NADPH--hemoprotein reductase] + O2 = an alcohol + oxidized [NADPH--hemoprotein reductase] + H2O + H(+). Its function is as follows. Cytochromes P450 are a group of heme-thiolate monooxygenases. In liver microsomes, this enzyme is involved in an NADPH-dependent electron transport pathway. It oxidizes a variety of structurally unrelated compounds, including steroids, fatty acids, and xenobiotics. This chain is Cytochrome P450 2D10 (Cyp2d10), found in Mus musculus (Mouse).